Reading from the N-terminus, the 375-residue chain is Serpin B5 (375 aa).

5 N-linked (GlcNAc...) asparagine glycosylation sites follow: Asn99, Asn133, Asn155, Asn188, and Asn361.

It belongs to the serpin family. Ov-serpin subfamily. As to quaternary structure, interacts with IRF6.

The protein resides in the secreted. The protein localises to the extracellular space. In terms of biological role, tumor suppressor. It blocks the growth, invasion, and metastatic properties of mammary tumors. As it does not undergo the S (stressed) to R (relaxed) conformational transition characteristic of active serpins, it exhibits no serine protease inhibitory activity. This is Serpin B5 (SERPINB5) from Plecturocebus moloch (Dusky titi monkey).